Reading from the N-terminus, the 119-residue chain is Large ribosomal subunit protein bL20 (119 aa).

Belongs to the bacterial ribosomal protein bL20 family.

In terms of biological role, binds directly to 23S ribosomal RNA and is necessary for the in vitro assembly process of the 50S ribosomal subunit. It is not involved in the protein synthesizing functions of that subunit. The protein is Large ribosomal subunit protein bL20 of Cellvibrio japonicus (strain Ueda107) (Pseudomonas fluorescens subsp. cellulosa).